The chain runs to 393 residues: Na(+)/H(+) antiporter NhaA 1 (393 aa).

11 consecutive transmembrane segments (helical) span residues 23 to 43 (AGGV…NSPF), 58 to 78 (LSLT…LVGL), 96 to 116 (MLPG…FTAF), 126 to 146 (GWAV…SLLG), 155 to 175 (VFLA…IAIF), 178 to 198 (AEIS…LFVM), 224 to 244 (GVHA…KAAP), 265 to 285 (VAFI…FAGL), 298 to 318 (IMLG…WLAI), 334 to 354 (LYGV…IGLL), and 367 to 387 (IGVL…LRLV).

It belongs to the NhaA Na(+)/H(+) (TC 2.A.33) antiporter family.

It localises to the cell inner membrane. It carries out the reaction Na(+)(in) + 2 H(+)(out) = Na(+)(out) + 2 H(+)(in). In terms of biological role, na(+)/H(+) antiporter that extrudes sodium in exchange for external protons. This is Na(+)/H(+) antiporter NhaA 1 from Brucella anthropi (strain ATCC 49188 / DSM 6882 / CCUG 24695 / JCM 21032 / LMG 3331 / NBRC 15819 / NCTC 12168 / Alc 37) (Ochrobactrum anthropi).